Reading from the N-terminus, the 419-residue chain is RING finger protein 150 (419 aa).

Positions 1–34 (MALSVIQACRSLALSTWLLSFCFVHLLCLDFTVA) are cleaved as a signal peptide. Residues 35–197 (EKEEWYTAFV…NLQKYVSRTS (163 aa)) lie on the Extracellular side of the membrane. A PA domain is found at 70–172 (SLKREARGVL…PKGRELVLLM (103 aa)). A helical membrane pass occupies residues 198-218 (VVFVSISFIILMIISLAWLVF). Topologically, residues 219–419 (YYIQRFRYAN…IDTPTDDPKC (201 aa)) are cytoplasmic. An RING-type; atypical zinc finger spans residues 267–308 (CAVCIEGYKPNDVVRILPCRHLFHKCCVDPWLVDHRTCPMCK). Residues 374 to 419 (SEPLSQDTMPTEQSELQPIASGSSDVSLTTGAGHSDIDTPTDDPKC) form a disordered region. The segment covering 376 to 405 (PLSQDTMPTEQSELQPIASGSSDVSLTTGA) has biased composition (polar residues).

The protein localises to the membrane. This Danio rerio (Zebrafish) protein is RING finger protein 150 (rnf150).